Reading from the N-terminus, the 251-residue chain is DNA repair protein RecO (251 aa).

The protein belongs to the RecO family.

Functionally, involved in DNA repair and RecF pathway recombination. The chain is DNA repair protein RecO from Acetivibrio thermocellus (strain ATCC 27405 / DSM 1237 / JCM 9322 / NBRC 103400 / NCIMB 10682 / NRRL B-4536 / VPI 7372) (Clostridium thermocellum).